Here is a 225-residue protein sequence, read N- to C-terminus: MTIFYLVFIAVIIIIILYVLYLRPLYSGTSVIKGNTQYKADKLMIIAHPDDELIFGSKELIENPGWKVICITNGSKKSVNKISICYLMGHRSTYRRDEFINMMNLLHCQYEIWDYEDNYFNSNWNLKQLKNQLENLLREKNYKMVLTHNLAGEYGHTQHKTISKLLYDINPPNLYTFYYDSNTINPYLVLIKKLSHVYQSQDKIIKKNYKYIEHQSKIAVKNNSK.

Residues 2-22 form a helical membrane-spanning segment; that stretch reads TIFYLVFIAVIIIIILYVLYL. N-linked (GlcNAc...) asparagine; by host glycosylation is present at Asn73. Residues 114 to 146 adopt a coiled-coil conformation; it reads DYEDNYFNSNWNLKQLKNQLENLLREKNYKMVL. Asn222 carries N-linked (GlcNAc...) asparagine; by host glycosylation.

Its subcellular location is the membrane. This is an uncharacterized protein from Acanthamoeba polyphaga (Amoeba).